The sequence spans 479 residues: Flap endonuclease 1 (479 aa).

The segment at 1-106 (MGIKGLTKFI…SELEKRGEKR (106 aa)) is N-domain. Asp-34 is a binding site for Mg(2+). Residues Arg-47 and Arg-72 each contribute to the DNA site. Mg(2+) is bound by residues Asp-88, Glu-160, Glu-162, Asp-181, and Asp-183. The segment at 124-266 (EIKKQSGRTV…KTAYNLIKEY (143 aa)) is I-domain. Glu-160 provides a ligand contact to DNA. DNA contacts are provided by Gly-244 and Asp-246. Residue Asp-246 participates in Mg(2+) binding. Positions 349 to 357 (TQRRLDTFF) are interaction with PCNA. A disordered region spans residues 379–455 (AKGKGKKREL…NSDSGNIKNE (77 aa)). The span at 403–428 (NIKDEKKNTDKMDELKNKSDENFVKD) shows a compositional bias: basic and acidic residues.

It belongs to the XPG/RAD2 endonuclease family. FEN1 subfamily. As to quaternary structure, interacts with PCNA. Three molecules of FEN1 bind to one PCNA trimer with each molecule binding to one PCNA monomer. PCNA stimulates the nuclease activity without altering cleavage specificity. Mg(2+) serves as cofactor. In terms of processing, phosphorylated. Phosphorylation upon DNA damage induces relocalization to the nuclear plasma.

It localises to the nucleus. It is found in the nucleolus. The protein localises to the nucleoplasm. Its subcellular location is the mitochondrion. Functionally, structure-specific nuclease with 5'-flap endonuclease and 5'-3' exonuclease activities involved in DNA replication and repair. During DNA replication, cleaves the 5'-overhanging flap structure that is generated by displacement synthesis when DNA polymerase encounters the 5'-end of a downstream Okazaki fragment. It enters the flap from the 5'-end and then tracks to cleave the flap base, leaving a nick for ligation. Also involved in the long patch base excision repair (LP-BER) pathway, by cleaving within the apurinic/apyrimidinic (AP) site-terminated flap. Acts as a genome stabilization factor that prevents flaps from equilibrating into structures that lead to duplications and deletions. Also possesses 5'-3' exonuclease activity on nicked or gapped double-stranded DNA, and exhibits RNase H activity. Also involved in replication and repair of rDNA and in repairing mitochondrial DNA. This Plasmodium chabaudi chabaudi protein is Flap endonuclease 1.